The sequence spans 57 residues: Protein translocase subunit SecE (57 aa).

The chain crosses the membrane as a helical span at residues 33 to 53 (GLGILLVGFIGFVIFSIMTFV).

This sequence belongs to the SecE/SEC61-gamma family. Component of the Sec protein translocase complex. Heterotrimer consisting of SecY (alpha), SecG (beta) and SecE (gamma) subunits. The heterotrimers can form oligomers, although 1 heterotrimer is thought to be able to translocate proteins. Interacts with the ribosome. May interact with SecDF, and other proteins may be involved.

The protein localises to the cell membrane. Essential subunit of the Sec protein translocation channel SecYEG. Clamps together the 2 halves of SecY. May contact the channel plug during translocation. This Natronomonas pharaonis (strain ATCC 35678 / DSM 2160 / CIP 103997 / JCM 8858 / NBRC 14720 / NCIMB 2260 / Gabara) (Halobacterium pharaonis) protein is Protein translocase subunit SecE.